The sequence spans 67 residues: DNA-directed RNA polymerase subunit omega (67 aa).

Belongs to the RNA polymerase subunit omega family. The RNAP catalytic core consists of 2 alpha, 1 beta, 1 beta' and 1 omega subunit. When a sigma factor is associated with the core the holoenzyme is formed, which can initiate transcription.

It carries out the reaction RNA(n) + a ribonucleoside 5'-triphosphate = RNA(n+1) + diphosphate. In terms of biological role, promotes RNA polymerase assembly. Latches the N- and C-terminal regions of the beta' subunit thereby facilitating its interaction with the beta and alpha subunits. The chain is DNA-directed RNA polymerase subunit omega from Bordetella petrii (strain ATCC BAA-461 / DSM 12804 / CCUG 43448).